Reading from the N-terminus, the 364-residue chain is UDP-3-O-acylglucosamine N-acyltransferase (364 aa).

Catalysis depends on His-257, which acts as the Proton acceptor.

It belongs to the transferase hexapeptide repeat family. LpxD subfamily. Homotrimer.

The enzyme catalyses a UDP-3-O-[(3R)-3-hydroxyacyl]-alpha-D-glucosamine + a (3R)-hydroxyacyl-[ACP] = a UDP-2-N,3-O-bis[(3R)-3-hydroxyacyl]-alpha-D-glucosamine + holo-[ACP] + H(+). It participates in bacterial outer membrane biogenesis; LPS lipid A biosynthesis. In terms of biological role, catalyzes the N-acylation of UDP-3-O-acylglucosamine using 3-hydroxyacyl-ACP as the acyl donor. Is involved in the biosynthesis of lipid A, a phosphorylated glycolipid that anchors the lipopolysaccharide to the outer membrane of the cell. In Paracoccus denitrificans (strain Pd 1222), this protein is UDP-3-O-acylglucosamine N-acyltransferase.